A 370-amino-acid polypeptide reads, in one-letter code: Actin-related protein 2/3 complex subunit 1A (370 aa).

WD repeat units lie at residues F6 to A45, E50 to T89, P140 to K179, G202 to T241, T244 to S284, and L322 to Q365.

This sequence belongs to the WD repeat ARPC1 family. In terms of assembly, probable component of the Arp2/3 complex in which it may replace ARPC1B.

Its subcellular location is the cytoplasm. It localises to the cytoskeleton. The protein localises to the nucleus. In terms of biological role, probably functions as a component of the Arp2/3 complex which is involved in regulation of actin polymerization and together with an activating nucleation-promoting factor (NPF) mediates the formation of branched actin networks. In addition to its role in the cytoplasmic cytoskeleton, the Arp2/3 complex also promotes actin polymerization in the nucleus, thereby regulating gene transcription and repair of damaged DNA. The polypeptide is Actin-related protein 2/3 complex subunit 1A (Arpc1a) (Mus musculus (Mouse)).